Here is a 36-residue protein sequence, read N- to C-terminus: Trypsin inhibitor 2 (36 aa).

Cystine bridges form between Cys-3-Cys-20, Cys-10-Cys-24, and Cys-19-Cys-35.

Functionally, trypsin inhibitor. This chain is Trypsin inhibitor 2, found in Spinacia oleracea (Spinach).